Consider the following 215-residue polypeptide: MGKGDPKKPRGKMSSYAFFVQTCREEHKKKHPDASVNFSEFSKKCSERWKTMSAKEKGKFEDMAKADKARYEREMKTYIPPKGETKKKFKDPNAPKRPPSAFFLFCSEYRPKIKGEHPGLSIGDVAKKLGEMWNNTAADDKHPYEKKAAKLKEKYEKDIAAYRAKGKPDAAKKGVVKAEKSKKKKEEEEDEEDEEDEEEEEDEEDEEEEEDDDDE.

1–10 (MGKGDPKKPR) provides a ligand contact to heparin. The tract at residues 1 to 97 (MGKGDPKKPR…KFKDPNAPKR (97 aa)) is sufficient for interaction with HAVCR2. Lys-3, Lys-7, Lys-8, and Lys-12 each carry N6-acetyllysine. The tract at residues 3 to 15 (KGDPKKPRGKMSS) is LPS binding (delipidated). The segment at residues 9–79 (PRGKMSSYAF…RYEREMKTYI (71 aa)) is a DNA-binding region (HMG box 1). Cys-23 carries the cysteine sulfonic acid (-SO3H); alternate modification. Cys-23 and Cys-45 are oxidised to a cystine. The short motif at 27–43 (HKKKHPDASVNFSEFSK) is the Nuclear localization signal (NLS) 1 element. N6-acetyllysine occurs at positions 28, 29, and 30. Residue Lys-28 forms an Isoglutamyl lysine isopeptide (Lys-Gln) (interchain with Q-?) linkage. Position 35 is a phosphoserine (Ser-35). Lys-43 is subject to N6-acetyllysine. Residues Lys-43 and Lys-44 each participate in an isoglutamyl lysine isopeptide (Lys-Gln) (interchain with Q-?) cross-link. Position 45 is a cysteine sulfonic acid (-SO3H); alternate (Cys-45). The residue at position 51 (Thr-51) is a Phosphothreonine. Residue Lys-68 forms an Isoglutamyl lysine isopeptide (Lys-Gln) (interchain with Q-?) linkage. Residues 76–95 (KTYIPPKGETKKKFKDPNAP) are disordered. The segment at 80 to 96 (PPKGETKKKFKDPNAPK) is LPS binding (Lipid A). The segment covering 83 to 94 (GETKKKFKDPNA) has biased composition (basic and acidic residues). Residues 89 to 108 (FKDPNAPKRPPSAFFLFCSE) form a cytokine-stimulating activity region. An N6-acetyllysine modification is found at Lys-90. Residues 95–163 (PKRPPSAFFL…KYEKDIAAYR (69 aa)) constitute a DNA-binding region (HMG box 2). Ser-100 is subject to Phosphoserine. Cys-106 is modified (cysteine sulfonic acid (-SO3H)). 7 positions are modified to N6-acetyllysine: Lys-127, Lys-128, Lys-141, Lys-172, Lys-173, Lys-177, and Lys-180. The binding to AGER/RAGE stretch occupies residues 150 to 183 (KLKEKYEKDIAAYRAKGKPDAAKKGVVKAEKSKK). Residues 162–179 (YRAKGKPDAAKKGVVKAE) show a composition bias toward basic and acidic residues. Positions 162 to 215 (YRAKGKPDAAKKGVVKAEKSKKKKEEEEDEEDEEDEEEEEDEEDEEEEEDDDDE) are disordered. The short motif at 178 to 184 (AEKSKKK) is the Nuclear localization signal (NLS) 2 element. Lys-180 is covalently cross-linked (Isoglutamyl lysine isopeptide (Lys-Gln) (interchain with Q-?)). Ser-181 bears the ADP-ribosylserine mark. Lys-182, Lys-183, Lys-184, and Lys-185 each carry N6-acetyllysine. Isoglutamyl lysine isopeptide (Lys-Gln) (interchain with Q-?) cross-links involve residues Lys-182, Lys-183, and Lys-184. Acidic residues predominate over residues 187 to 215 (EEEDEEDEEDEEEEEDEEDEEEEEDDDDE).

It belongs to the HMGB family. As to quaternary structure, interacts (fully reduced HMGB1) with CXCL12; probably in a 1:2 ratio involving two molecules of CXCL12, each interacting with one HMG box of HMGB1; inhibited by glycyrrhizin. Associates with the TLR4:LY96 receptor complex. Component of the RAG complex composed of core components RAG1 and RAG2, and associated component HMGB1 or HMGB2. Interacts (in cytoplasm upon starvation) with BECN1; inhibits the interaction of BECN1 and BCL2 leading to promotion of autophagy. Interacts with KPNA1; involved in nuclear import. Interacts with SREBF1, TLR2, TLR4, TLR9, PTPRZ1, APEX1, FEN1, POLB, TERT. Interacts with IL1B, AGER, MSH2, XPA, XPC, HNF1A, TP53. Interacts with CD24; the probable CD24:SIGLEC10 complex is proposed to inhibit HGMB1-mediated tissue damage immune response. Interacts with THBD; prevents HGMB1 interaction with ACER/RAGE and inhibits HGMB1 pro-inflammatory activity. Interacts with HAVCR2; impairs HMGB1 binding to B-DNA and likely HMGB1-mediated innate immune response. Interacts with XPO1; mediating nuclear export. Interacts with receptor RAGE/AGER. Phosphorylated at serine residues. Phosphorylation in both NLS regions is required for cytoplasmic translocation followed by secretion. Phosphorylation at Thr-51 within the NLS is crucial for secretion induced by porcine reproductive and respiratory syndrome virus (PRRSV). In terms of processing, acetylated on multiple sites upon stimulation with LPS. Acetylation on lysine residues in the nuclear localization signals (NLS 1 and NLS 2) leads to cytoplasmic localization and subsequent secretion. Acetylation on Lys-3 results in preferential binding to DNA ends and impairs DNA bending activity. Post-translationally, reduction/oxidation of cysteine residues Cys-23, Cys-45 and Cys-106 and a possible intramolecular disulfide bond involving Cys-23 and Cys-45 give rise to different redox forms with specific functional activities in various cellular compartments: 1- fully reduced HMGB1 (HMGB1C23hC45hC106h), 2- disulfide HMGB1 (HMGB1C23-C45C106h) and 3- sulfonyl HMGB1 (HMGB1C23soC45soC106so). Poly-ADP-ribosylated by PARP1 when secreted following stimulation with LPS. In terms of processing, in vitro cleavage by CASP1 is liberating a HMG box 1-containing peptide which may mediate immunogenic activity; the peptide antagonizes apoptosis-induced immune tolerance. Can be proteolytically cleaved by a thrombin:thrombomodulin complex; reduces binding to heparin and pro-inflammatory activities. Post-translationally, forms covalent cross-links mediated by transglutaminase TGM2, between a glutamine and the epsilon-amino group of a lysine residue, forming homopolymers and heteropolymers.

The protein resides in the nucleus. Its subcellular location is the chromosome. The protein localises to the cytoplasm. It localises to the secreted. It is found in the cell membrane. The protein resides in the endosome. Its subcellular location is the endoplasmic reticulum-Golgi intermediate compartment. Functionally, multifunctional redox sensitive protein with various roles in different cellular compartments. In the nucleus is one of the major chromatin-associated non-histone proteins and acts as a DNA chaperone involved in replication, transcription, chromatin remodeling, V(D)J recombination, DNA repair and genome stability. Proposed to be an universal biosensor for nucleic acids. Promotes host inflammatory response to sterile and infectious signals and is involved in the coordination and integration of innate and adaptive immune responses. In the cytoplasm functions as a sensor and/or chaperone for immunogenic nucleic acids implicating the activation of TLR9-mediated immune responses, and mediates autophagy. Acts as a danger-associated molecular pattern (DAMP) molecule that amplifies immune responses during tissue injury. Released to the extracellular environment can bind DNA, nucleosomes, IL-1 beta, CXCL12, AGER isoform 2/sRAGE, lipopolysaccharide (LPS) and lipoteichoic acid (LTA), and activates cells through engagement of multiple surface receptors. In the extracellular compartment fully reduced HMGB1 (released by necrosis) acts as a chemokine, disulfide HMGB1 (actively secreted) as a cytokine, and sulfonyl HMGB1 (released from apoptotic cells) promotes immunological tolerance. Has proangiogenic activity. May be involved in platelet activation. Binds to phosphatidylserine and phosphatidylethanolamide. Bound to RAGE mediates signaling for neuronal outgrowth. May play a role in accumulation of expanded polyglutamine (polyQ) proteins. Its function is as follows. Nuclear functions are attributed to fully reduced HGMB1. Associates with chromatin and binds DNA with a preference to non-canonical DNA structures such as single-stranded DNA, DNA-containing cruciforms or bent structures, supercoiled DNA and ZDNA. Can bent DNA and enhance DNA flexibility by looping thus providing a mechanism to promote activities on various gene promoters by enhancing transcription factor binding and/or bringing distant regulatory sequences into close proximity. May be involved in nucleotide excision repair (NER), mismatch repair (MMR) and base excision repair (BER) pathways, and double strand break repair such as non-homologous end joining (NHEJ). Involved in V(D)J recombination by acting as a cofactor of the RAG complex: acts by stimulating cleavage and RAG protein binding at the 23 bp spacer of conserved recombination signal sequences (RSS). In vitro can displace histone H1 from highly bent DNA. Can restructure the canonical nucleosome leading to relaxation of structural constraints for transcription factor-binding. Enhances binding of sterol regulatory element-binding proteins (SREBPs) such as SREBF1 to their cognate DNA sequences and increases their transcriptional activities. Facilitates binding of TP53 to DNA. May be involved in mitochondrial quality control and autophagy in a transcription-dependent fashion implicating HSPB1. Can modulate the activity of the telomerase complex and may be involved in telomere maintenance. Represses porcine circovirus type 2 replication within the nucleus by binding to the Ori region of the viral genome. In the cytoplasm proposed to dissociate the BECN1:BCL2 complex via competitive interaction with BECN1 leading to autophagy activation. Can protect BECN1 and ATG5 from calpain-mediated cleavage and thus proposed to control their proautophagic and proapoptotic functions and to regulate the extent and severity of inflammation-associated cellular injury. In myeloid cells has a protective role against endotoxemia and bacterial infection by promoting autophagy. Involved in endosomal translocation and activation of TLR9 in response to CpG-DNA in macrophages. In terms of biological role, in the extracellular compartment (following either active secretion or passive release) involved in regulation of the inflammatory response. Fully reduced HGMB1 (which subsequently gets oxidized after release) in association with CXCL12 mediates the recruitment of inflammatory cells during the initial phase of tissue injury; the CXCL12:HMGB1 complex triggers CXCR4 homodimerization. Induces the migration of monocyte-derived immature dendritic cells and seems to regulate adhesive and migratory functions of neutrophils implicating AGER/RAGE and ITGAM. Can bind to various types of DNA and RNA including microbial unmethylated CpG-DNA to enhance the innate immune response to nucleic acids. Proposed to act in promiscuous DNA/RNA sensing which cooperates with subsequent discriminative sensing by specific pattern recognition receptors. Promotes extracellular DNA-induced AIM2 inflammasome activation implicating AGER/RAGE. Disulfide HMGB1 binds to transmembrane receptors, such as AGER/RAGE, TLR2, TLR4 and probably TREM1, thus activating their signal transduction pathways. Mediates the release of cytokines/chemokines such as TNF, IL-1, IL-6, IL-8, CCL2, CCL3, CCL4 and CXCL10. Promotes secretion of interferon-gamma by macrophage-stimulated natural killer (NK) cells in concert with other cytokines like IL-2 or IL-12. TLR4 is proposed to be the primary receptor promoting macrophage activation and signaling through TLR4 seems to implicate LY96/MD-2. In bacterial LPS- or LTA-mediated inflammatory responses binds to the endotoxins and transfers them to CD14 for signaling to the respective TLR4:LY96 and TLR2 complexes. Contributes to tumor proliferation by association with ACER/RAGE. Can bind to IL1-beta and signals through the IL1R1:IL1RAP receptor complex. Binding to class A CpG activates cytokine production in plasmacytoid dendritic cells implicating TLR9, MYD88 and AGER/RAGE and can activate autoreactive B cells. Via HMGB1-containing chromatin immune complexes may also promote B cell responses to endogenous TLR9 ligands through a B-cell receptor (BCR)-dependent and ACER/RAGE-independent mechanism. Inhibits phagocytosis of apoptotic cells by macrophages; the function is dependent on poly-ADP-ribosylation and involves binding to phosphatidylserine on the cell surface of apoptotic cells. In adaptive immunity may be involved in enhancing immunity through activation of effector T cells and suppression of regulatory T (TReg) cells. In contrast, without implicating effector or regulatory T-cells, required for tumor infiltration and activation of T-cells expressing the lymphotoxin LTA:LTB heterotrimer thus promoting tumor malignant progression. Also reported to limit proliferation of T-cells. Released HMGB1:nucleosome complexes formed during apoptosis can signal through TLR2 to induce cytokine production. Involved in induction of immunological tolerance by apoptotic cells; its pro-inflammatory activities when released by apoptotic cells are neutralized by reactive oxygen species (ROS)-dependent oxidation specifically on Cys-106. During macrophage activation by activated lymphocyte-derived self apoptotic DNA (ALD-DNA) promotes recruitment of ALD-DNA to endosomes. The polypeptide is High mobility group protein B1 (HMGB1) (Sus scrofa (Pig)).